We begin with the raw amino-acid sequence, 264 residues long: Alkaline ceramidase 1 (264 aa).

Over Met-1 to Glu-27 the chain is Lumenal. Asp-13, Trp-14, Glu-16, Asn-18, and Glu-27 together coordinate Ca(2+). Residues Phe-28–Met-48 form a helical membrane-spanning segment. Residues His-49–Arg-57 lie on the Cytoplasmic side of the membrane. Residues Tyr-58 to Met-78 traverse the membrane as a helical segment. His-77 lines the Zn(2+) pocket. Over Thr-79–Ser-81 the chain is Lumenal. The chain crosses the membrane as a helical span at residues Phe-82 to Ile-102. Residues Trp-103–Gln-119 are Cytoplasmic-facing. Residues Phe-120 to Leu-137 form a helical membrane-spanning segment. A topological domain (lumenal) is located at residue Arg-138. A helical membrane pass occupies residues Pro-139 to Gln-159. The Cytoplasmic portion of the chain corresponds to Glu-160–Ser-176. Residues Val-177 to Trp-197 traverse the membrane as a helical segment. The Lumenal segment spans residues Gln-198–His-206. Zn(2+) contacts are provided by His-206 and His-210. The helical transmembrane segment at Ser-207–Val-227 threads the bilayer. Residues Asp-228–Cys-264 are Cytoplasmic-facing.

This sequence belongs to the alkaline ceramidase family. Zn(2+) serves as cofactor. Mainly expressed in epidermis.

It is found in the endoplasmic reticulum membrane. It catalyses the reaction an N-acylsphing-4-enine + H2O = sphing-4-enine + a fatty acid. The enzyme catalyses N-tetracosanoyl-sphing-4-enine + H2O = tetracosanoate + sphing-4-enine. It carries out the reaction an N-acylsphinganine + H2O = sphinganine + a fatty acid. The catalysed reaction is N-(9Z-octadecenoyl)-sphing-4-enine + H2O = sphing-4-enine + (9Z)-octadecenoate. It catalyses the reaction N-(15Z-tetracosenoyl)-sphing-4-enine + H2O = (15Z)-tetracosenoate + sphing-4-enine. It participates in lipid metabolism; sphingolipid metabolism. Its activity is regulated as follows. Inhibited by sphingosine. Activity is Ca(2+)-dependent. Endoplasmic reticulum ceramidase that catalyzes the hydrolysis of ceramides into sphingosine and free fatty acids at alkaline pH. Ceramides, sphingosine, and its phosphorylated form sphingosine-1-phosphate are bioactive lipids that mediate cellular signaling pathways regulating several biological processes including cell proliferation, apoptosis and differentiation. Exhibits a strong substrate specificity towards the natural stereoisomer of ceramides with D-erythro-sphingosine as a backbone and has a higher activity towards very long-chain unsaturated fatty acids like the C24:1-ceramide. May also hydrolyze dihydroceramides to produce dihydrosphingosine. ACER1 is a skin-specific ceramidase that regulates the levels of ceramides, sphingosine and sphingosine-1-phosphate in the epidermis, mediates the calcium-induced differentiation of epidermal keratinocytes and more generally plays an important role in skin homeostasis. The polypeptide is Alkaline ceramidase 1 (Homo sapiens (Human)).